We begin with the raw amino-acid sequence, 152 residues long: TRAPP-associated protein TCA17 (152 aa).

Belongs to the TRAPP small subunits family. Sedlin subfamily. Interacts with the TRAPP II complex; TRAPP II subunits TRS33 and TRS65 are required for this interaction.

The protein localises to the golgi apparatus. It localises to the trans-Golgi network. Required, together with the TRAPP II subunit TRS33, for TRAPP II complex assembly or stability, and for proper Golgi localization of TRAPP and the Rab GTPase YPT31. The polypeptide is TRAPP-associated protein TCA17 (TCA17) (Saccharomyces cerevisiae (strain ATCC 204508 / S288c) (Baker's yeast)).